The following is a 122-amino-acid chain: UPF0102 protein VV1_0590 (122 aa).

It belongs to the UPF0102 family.

This is UPF0102 protein VV1_0590 from Vibrio vulnificus (strain CMCP6).